The chain runs to 196 residues: ATP-dependent Clp protease proteolytic subunit 1 (196 aa).

Ser-96 acts as the Nucleophile in catalysis. The active site involves His-121.

It belongs to the peptidase S14 family. As to quaternary structure, fourteen ClpP subunits assemble into 2 heptameric rings which stack back to back to give a disk-like structure with a central cavity, resembling the structure of eukaryotic proteasomes.

The protein localises to the cytoplasm. It catalyses the reaction Hydrolysis of proteins to small peptides in the presence of ATP and magnesium. alpha-casein is the usual test substrate. In the absence of ATP, only oligopeptides shorter than five residues are hydrolyzed (such as succinyl-Leu-Tyr-|-NHMec, and Leu-Tyr-Leu-|-Tyr-Trp, in which cleavage of the -Tyr-|-Leu- and -Tyr-|-Trp bonds also occurs).. Cleaves peptides in various proteins in a process that requires ATP hydrolysis. Has a chymotrypsin-like activity. Plays a major role in the degradation of misfolded proteins. This is ATP-dependent Clp protease proteolytic subunit 1 from Prochlorococcus marinus (strain NATL2A).